A 75-amino-acid polypeptide reads, in one-letter code: uncharacterized protein (75 aa).

The region spanning 1 to 75 is the Glutaredoxin domain; it reads MIKIYSTPTC…KAEIDKLIEK (75 aa). Cys10 and Cys13 are disulfide-bonded.

Belongs to the glutaredoxin family.

This is an uncharacterized protein from Clostridium pasteurianum.